Consider the following 248-residue polypeptide: Probable transcriptional regulatory protein MCA1220 (248 aa).

The protein belongs to the TACO1 family.

It is found in the cytoplasm. The chain is Probable transcriptional regulatory protein MCA1220 from Methylococcus capsulatus (strain ATCC 33009 / NCIMB 11132 / Bath).